A 319-amino-acid polypeptide reads, in one-letter code: Acetyl esterase (319 aa).

An Involved in the stabilization of the negatively charged intermediate by the formation of the oxyanion hole motif is present at residues 91 to 93 (HGG). Residues Ser-165, Asp-262, and His-292 contribute to the active site.

The protein belongs to the 'GDXG' lipolytic enzyme family. As to quaternary structure, homodimer. Interacts with MalT and MelA.

It is found in the cytoplasm. Functionally, displays esterase activity towards short chain fatty esters (acyl chain length of up to 8 carbons). Able to hydrolyze triacetylglycerol (triacetin) and tributyrylglycerol (tributyrin), but not trioleylglycerol (triolein) or cholesterol oleate. Negatively regulates MalT activity by antagonizing maltotriose binding. Inhibits MelA galactosidase activity. The polypeptide is Acetyl esterase (Escherichia coli O157:H7).